The following is a 473-amino-acid chain: Bifunctional protein GlmU (473 aa).

Residues 1–241 (MATQPTPLTA…VGSLVGINDR (241 aa)) form a pyrophosphorylase region. UDP-N-acetyl-alpha-D-glucosamine is bound by residues 13–16 (LAAG), Lys27, Gln84, and 89–90 (GT). Position 114 (Asp114) interacts with Mg(2+). Gly152, Glu167, Asn182, and Asn239 together coordinate UDP-N-acetyl-alpha-D-glucosamine. Asn239 contributes to the Mg(2+) binding site. The segment at 242–262 (AQLAAAEEVLYGRIADRLRKS) is linker. An N-acetyltransferase region spans residues 263 to 473 (GVTIRTSARI…KARLKDAAKK (211 aa)). Arg343 and Lys361 together coordinate UDP-N-acetyl-alpha-D-glucosamine. Residue His373 is the Proton acceptor of the active site. Positions 376 and 387 each coordinate UDP-N-acetyl-alpha-D-glucosamine. Acetyl-CoA is bound by residues Ala390, 396–397 (NY), Ser415, Thr433, and Arg450.

The protein in the N-terminal section; belongs to the N-acetylglucosamine-1-phosphate uridyltransferase family. It in the C-terminal section; belongs to the transferase hexapeptide repeat family. In terms of assembly, homotrimer. The cofactor is Mg(2+).

Its subcellular location is the cytoplasm. The catalysed reaction is alpha-D-glucosamine 1-phosphate + acetyl-CoA = N-acetyl-alpha-D-glucosamine 1-phosphate + CoA + H(+). It catalyses the reaction N-acetyl-alpha-D-glucosamine 1-phosphate + UTP + H(+) = UDP-N-acetyl-alpha-D-glucosamine + diphosphate. It functions in the pathway nucleotide-sugar biosynthesis; UDP-N-acetyl-alpha-D-glucosamine biosynthesis; N-acetyl-alpha-D-glucosamine 1-phosphate from alpha-D-glucosamine 6-phosphate (route II): step 2/2. The protein operates within nucleotide-sugar biosynthesis; UDP-N-acetyl-alpha-D-glucosamine biosynthesis; UDP-N-acetyl-alpha-D-glucosamine from N-acetyl-alpha-D-glucosamine 1-phosphate: step 1/1. It participates in bacterial outer membrane biogenesis; LPS lipid A biosynthesis. Functionally, catalyzes the last two sequential reactions in the de novo biosynthetic pathway for UDP-N-acetylglucosamine (UDP-GlcNAc). The C-terminal domain catalyzes the transfer of acetyl group from acetyl coenzyme A to glucosamine-1-phosphate (GlcN-1-P) to produce N-acetylglucosamine-1-phosphate (GlcNAc-1-P), which is converted into UDP-GlcNAc by the transfer of uridine 5-monophosphate (from uridine 5-triphosphate), a reaction catalyzed by the N-terminal domain. This chain is Bifunctional protein GlmU, found in Sorangium cellulosum (strain So ce56) (Polyangium cellulosum (strain So ce56)).